A 188-amino-acid polypeptide reads, in one-letter code: Ribosome-recycling factor (188 aa).

This sequence belongs to the RRF family.

It is found in the cytoplasm. Functionally, responsible for the release of ribosomes from messenger RNA at the termination of protein biosynthesis. May increase the efficiency of translation by recycling ribosomes from one round of translation to another. This is Ribosome-recycling factor from Gluconacetobacter diazotrophicus (strain ATCC 49037 / DSM 5601 / CCUG 37298 / CIP 103539 / LMG 7603 / PAl5).